The sequence spans 280 residues: NAD-capped RNA hydrolase NudC (280 aa).

Arginine 83 lines the substrate pocket. The Zn(2+) site is built by cysteine 113, cysteine 116, cysteine 131, and cysteine 134. A substrate-binding site is contributed by tyrosine 139. The Nudix hydrolase domain occupies 140–268 (PRVAPAIIVL…ASRRLLDDAL (129 aa)). A divalent metal cation contacts are provided by alanine 177, glutamate 193, and glutamate 197. Residues 178 to 199 (GFVEPSETLEAAVHREVGEEVG) carry the Nudix box motif. Position 211–218 (211–218 (QPWPFPHS)) interacts with substrate. Glutamate 238 contributes to the a divalent metal cation binding site.

Belongs to the Nudix hydrolase family. NudC subfamily. Homodimer. Requires Mg(2+) as cofactor. Mn(2+) is required as a cofactor. It depends on Zn(2+) as a cofactor.

The enzyme catalyses a 5'-end NAD(+)-phospho-ribonucleoside in mRNA + H2O = a 5'-end phospho-adenosine-phospho-ribonucleoside in mRNA + beta-nicotinamide D-ribonucleotide + 2 H(+). It catalyses the reaction NAD(+) + H2O = beta-nicotinamide D-ribonucleotide + AMP + 2 H(+). The catalysed reaction is NADH + H2O = reduced beta-nicotinamide D-ribonucleotide + AMP + 2 H(+). Its function is as follows. mRNA decapping enzyme that specifically removes the nicotinamide adenine dinucleotide (NAD) cap from a subset of mRNAs by hydrolyzing the diphosphate linkage to produce nicotinamide mononucleotide (NMN) and 5' monophosphate mRNA. The NAD-cap is present at the 5'-end of some mRNAs and stabilizes RNA against 5'-processing. Has preference for mRNAs with a 5'-end purine. Catalyzes the hydrolysis of a broad range of dinucleotide pyrophosphates. The sequence is that of NAD-capped RNA hydrolase NudC from Deinococcus radiodurans (strain ATCC 13939 / DSM 20539 / JCM 16871 / CCUG 27074 / LMG 4051 / NBRC 15346 / NCIMB 9279 / VKM B-1422 / R1).